We begin with the raw amino-acid sequence, 883 residues long: Phosphoenolpyruvate carboxylase (883 aa).

Active-site residues include His138 and Lys546.

The protein belongs to the PEPCase type 1 family. Mg(2+) serves as cofactor.

It catalyses the reaction oxaloacetate + phosphate = phosphoenolpyruvate + hydrogencarbonate. Forms oxaloacetate, a four-carbon dicarboxylic acid source for the tricarboxylic acid cycle. The protein is Phosphoenolpyruvate carboxylase of Escherichia coli O127:H6 (strain E2348/69 / EPEC).